The primary structure comprises 396 residues: S-adenosylmethionine decarboxylase proenzyme (396 aa).

Catalysis depends on residues glutamate 29 and glutamate 32. Serine 88 functions as the Schiff-base intermediate with substrate; via pyruvic acid in the catalytic mechanism. Pyruvic acid (Ser); by autocatalysis is present on serine 88. The active-site Proton donor; for catalytic activity is the cysteine 102. Catalysis depends on proton acceptor; for processing activity residues serine 287 and histidine 301.

Belongs to the eukaryotic AdoMetDC family. It depends on pyruvate as a cofactor. Is synthesized initially as an inactive proenzyme. Formation of the active enzyme involves a self-maturation process in which the active site pyruvoyl group is generated from an internal serine residue via an autocatalytic post-translational modification. Two non-identical subunits are generated from the proenzyme in this reaction, and the pyruvate is formed at the N-terminus of the alpha chain, which is derived from the carboxyl end of the proenzyme. The post-translation cleavage follows an unusual pathway, termed non-hydrolytic serinolysis, in which the side chain hydroxyl group of the serine supplies its oxygen atom to form the C-terminus of the beta chain, while the remainder of the serine residue undergoes an oxidative deamination to produce ammonia and the pyruvoyl group blocking the N-terminus of the alpha chain.

The enzyme catalyses S-adenosyl-L-methionine + H(+) = S-adenosyl 3-(methylsulfanyl)propylamine + CO2. The protein operates within amine and polyamine biosynthesis; S-adenosylmethioninamine biosynthesis; S-adenosylmethioninamine from S-adenosyl-L-methionine: step 1/1. Catalyzes the decarboxylation of S-adenosylmethionine, a key step in the biosynthetic pathway for spermidine and spermine. It is essential for normal growth, sporulation, and maintenance of ds-RNA virus. This is S-adenosylmethionine decarboxylase proenzyme (SPE2) from Saccharomyces cerevisiae (strain ATCC 204508 / S288c) (Baker's yeast).